Reading from the N-terminus, the 183-residue chain is ATP-dependent protease subunit HslV (183 aa).

Thr7 is an active-site residue. The Na(+) site is built by Gly162, Cys165, and Thr168.

Belongs to the peptidase T1B family. HslV subfamily. A double ring-shaped homohexamer of HslV is capped on each side by a ring-shaped HslU homohexamer. The assembly of the HslU/HslV complex is dependent on binding of ATP.

It is found in the cytoplasm. It catalyses the reaction ATP-dependent cleavage of peptide bonds with broad specificity.. With respect to regulation, allosterically activated by HslU binding. Protease subunit of a proteasome-like degradation complex believed to be a general protein degrading machinery. This Chromobacterium violaceum (strain ATCC 12472 / DSM 30191 / JCM 1249 / CCUG 213 / NBRC 12614 / NCIMB 9131 / NCTC 9757 / MK) protein is ATP-dependent protease subunit HslV.